The sequence spans 143 residues: Ribosome-binding factor A (143 aa).

Residues 123–143 (DKSLQENYKQNDKETKAEKLR) are disordered.

The protein belongs to the RbfA family. As to quaternary structure, monomer. Binds 30S ribosomal subunits, but not 50S ribosomal subunits or 70S ribosomes.

It is found in the cytoplasm. Functionally, one of several proteins that assist in the late maturation steps of the functional core of the 30S ribosomal subunit. Associates with free 30S ribosomal subunits (but not with 30S subunits that are part of 70S ribosomes or polysomes). Required for efficient processing of 16S rRNA. May interact with the 5'-terminal helix region of 16S rRNA. The protein is Ribosome-binding factor A of Francisella tularensis subsp. mediasiatica (strain FSC147).